The primary structure comprises 124 residues: Small ribosomal subunit protein uS13 (124 aa).

Residues 98–124 (VRGQRTKTNARTRKGPKRTIAGKKKAR) are disordered.

The protein belongs to the universal ribosomal protein uS13 family. Part of the 30S ribosomal subunit. Forms a loose heterodimer with protein S19. Forms two bridges to the 50S subunit in the 70S ribosome.

Its function is as follows. Located at the top of the head of the 30S subunit, it contacts several helices of the 16S rRNA. In the 70S ribosome it contacts the 23S rRNA (bridge B1a) and protein L5 of the 50S subunit (bridge B1b), connecting the 2 subunits; these bridges are implicated in subunit movement. Contacts the tRNAs in the A and P-sites. The sequence is that of Small ribosomal subunit protein uS13 from Mycobacterium leprae (strain Br4923).